A 455-amino-acid polypeptide reads, in one-letter code: Protein king tubby (455 aa).

The interval Arg-35–Ser-92 is disordered. Positions Leu-67–Ser-92 are enriched in low complexity. Position 144 is a phosphoserine (Ser-144).

It belongs to the TUB family.

It is found in the cytoplasm. It localises to the nucleus. The protein localises to the cell projection. The protein resides in the cilium membrane. Its subcellular location is the rhabdomere. In Drosophila virilis (Fruit fly), this protein is Protein king tubby.